The sequence spans 450 residues: UDP-N-acetylmuramoylalanine--D-glutamate ligase (450 aa).

119–125 serves as a coordination point for ATP; sequence GSNGKTT.

Belongs to the MurCDEF family.

The protein resides in the cytoplasm. The catalysed reaction is UDP-N-acetyl-alpha-D-muramoyl-L-alanine + D-glutamate + ATP = UDP-N-acetyl-alpha-D-muramoyl-L-alanyl-D-glutamate + ADP + phosphate + H(+). The protein operates within cell wall biogenesis; peptidoglycan biosynthesis. Its function is as follows. Cell wall formation. Catalyzes the addition of glutamate to the nucleotide precursor UDP-N-acetylmuramoyl-L-alanine (UMA). The protein is UDP-N-acetylmuramoylalanine--D-glutamate ligase of Streptococcus pneumoniae serotype 19F (strain G54).